Consider the following 720-residue polypeptide: Catalase-peroxidase (720 aa).

The tryptophyl-tyrosyl-methioninium (Trp-Tyr) (with M-233) cross-link spans Trp-82–Tyr-207. His-83 acts as the Proton acceptor in catalysis. The tryptophyl-tyrosyl-methioninium (Tyr-Met) (with W-82) cross-link spans Tyr-207–Met-233. His-248 is a binding site for heme b.

This sequence belongs to the peroxidase family. Peroxidase/catalase subfamily. As to quaternary structure, homodimer or homotetramer. Heme b is required as a cofactor. In terms of processing, formation of the three residue Trp-Tyr-Met cross-link is important for the catalase, but not the peroxidase activity of the enzyme.

It catalyses the reaction H2O2 + AH2 = A + 2 H2O. It carries out the reaction 2 H2O2 = O2 + 2 H2O. Bifunctional enzyme with both catalase and broad-spectrum peroxidase activity. This Halobacterium salinarum (strain ATCC 29341 / DSM 671 / R1) protein is Catalase-peroxidase.